We begin with the raw amino-acid sequence, 1205 residues long: cGMP-specific 3',5'-cyclic phosphodiesterase (1205 aa).

The segment at 1 to 153 (MTDVSSPAGG…TKASTTASQQ (153 aa)) is disordered. A compositionally biased stretch (low complexity) spans 18-32 (TTSSSPAATTSASSS). A compositionally biased stretch (polar residues) spans 33–48 (KPLTNGANKTTISTTA). Residues 62-71 (GAIPASSSSG) are compositionally biased toward low complexity. Over residues 83 to 94 (SNNNRPAATNRS) the composition is skewed to polar residues. The span at 118-140 (SSSSPSQSPSQTQASIQTQTSQQ) shows a compositional bias: low complexity. 2 GAF domains span residues 259–411 (DIDV…GIGI) and 443–624 (NLEC…GLGI). Residues 654–1052 (SQDQTEKLTQ…RNWQDLAEKV (399 aa)) enclose the PDEase domain. Residue His-730 is the Proton donor of the active site. Residues His-734, His-770, Asp-771, and Asp-956 each coordinate a divalent metal cation. Disordered regions lie at residues 1093–1122 (QQSQ…TGAL) and 1152–1205 (SHVS…CALL). Composition is skewed to basic and acidic residues over residues 1098–1109 (GSEDSHTPEHQR) and 1152–1162 (SHVSEDMDDKS). Residues 1171–1191 (ASGSMGRMSASSSTSSAGGQM) show a composition bias toward low complexity. The span at 1195–1205 (SKKRSKLCALL) shows a compositional bias: basic residues. Cys-1202 carries the cysteine methyl ester modification. Cys-1202 carries the S-farnesyl cysteine lipid modification. Positions 1203-1205 (ALL) are cleaved as a propeptide — removed in mature form.

Belongs to the cyclic nucleotide phosphodiesterase family. Interacts with PrBP. It depends on a divalent metal cation as a cofactor.

It is found in the cell membrane. The enzyme catalyses 3',5'-cyclic GMP + H2O = GMP + H(+). In terms of biological role, has a role regulating cGMP transport in Malpighian tubule principal cells. This Drosophila sechellia (Fruit fly) protein is cGMP-specific 3',5'-cyclic phosphodiesterase.